A 1051-amino-acid polypeptide reads, in one-letter code: MPPPPHIKPENVLKRAQELIAVGQAPAALNVLHEHVTSKRTRSSPIASLEPVMLLFVELCVDLRKGKAAKDGLYQYKNIAQNTNVGTIEVVLKKFIELAEKKVTEAQAKADEIQSSLESAAPSSNVEDLEAIETPETILLATVSGEQSRDRTDRAVVTPWLKFLWETYRTVLEILKNNARLEVMYQTTALQAFQFCLKYTRKTEFRRLCELLRNHVQNAAKYSAQMHAINLSDPDTLQRHLDTRFQQLNVAVELELWQEAFRSIEDIHTLLSLSKRPAKNVMMANYYEKLARIFLVSENYLFHAAAWNRYYNLLRQSAAALAAGQGTKKENPSVTEADMTKAASFVLLSALSIPVISTSRSRGALVDVDEARKNKNARLTNLLGMAQPPSRAVLFRDALNKGLLKRARPEIRDLYNILEVDFHPLSICKKITPILKQIGADPEMEKYVLPLQQVILTRLFQQLSQVYESVELKFVYELAQFPDPFQITPAMIEKFIMNGCKKGDLAIRVDHTAGVLTFDTDIFSSAKALHSGSAAGSAESEVGSVQRLQNTPAEIARLQLTRLAKTLHVTCMYVDPSYNEARIQAKKAAQARAEAGAAKEHEETLARRVLIEKKKEAATDALQRKQREEETRKRIRNQQLQEAEKQRLLDEQREREKKRLRDEQERIRQQELKKQLEELKSGVKGIDISEIDLEDLDANRLRAIKLAQLEKEKNELNERIRTTAKRIDHLERAFRREELKHIPEDYEAQKKRDMELYEAIKAETLKEAEEKHKEAVALKHRLSRLVPVFSSFRKEVSEKRHEEFEKRRKAAEREFEAKKKQRIKEVQERRRRERAEREAEERRRKEEEERAKREEEERIAKEEERRRILAEEKAKREEERKRLDEIAQRQKQREEEAEARRAARKSGLAEPPTRAAELERPVERTAPRLNLVSRTGSGPSWRERQAAKEAAGAAPAPAAAEAPKEEVQLPRRTGGYVPPHLRSGANASPATPPSNGPAPEKYVPRHMRESSSSQPPSRTQTPPAAAPASSDKPEASPAPQKWVPRWKQQQQ.

Positions 92–121 form a coiled coil; the sequence is LKKFIELAEKKVTEAQAKADEIQSSLESAA. A PCI domain is found at 339–523; that stretch reads MTKAASFVLL…GVLTFDTDIF (185 aa). The stretch at 608 to 905 forms a coiled coil; that stretch reads RVLIEKKKEA…EAEARRAARK (298 aa). Composition is skewed to basic and acidic residues over residues 617-632, 642-664, 794-901, and 916-926; these read AATD…EETR, EAEK…RDEQ, KEVS…EARR, and AELERPVERTA. Disordered regions lie at residues 617–664 and 794–1051; these read AATD…RDEQ and KEVS…QQQQ. 2 stretches are compositionally biased toward low complexity: residues 948-961 and 1010-1039; these read KEAA…AAAE and SSSS…SPAP.

This sequence belongs to the eIF-3 subunit A family. Component of the eukaryotic translation initiation factor 3 (eIF-3) complex.

It is found in the cytoplasm. RNA-binding component of the eukaryotic translation initiation factor 3 (eIF-3) complex, which is involved in protein synthesis of a specialized repertoire of mRNAs and, together with other initiation factors, stimulates binding of mRNA and methionyl-tRNAi to the 40S ribosome. The eIF-3 complex specifically targets and initiates translation of a subset of mRNAs involved in cell proliferation. This Aspergillus fumigatus (strain CBS 144.89 / FGSC A1163 / CEA10) (Neosartorya fumigata) protein is Eukaryotic translation initiation factor 3 subunit A (tif32).